The chain runs to 206 residues: Large ribosomal subunit protein uL4 (206 aa).

The disordered stretch occupies residues 49 to 73 (KTKTISEISGTTKKPFAQKGGGRAR).

The protein belongs to the universal ribosomal protein uL4 family. Part of the 50S ribosomal subunit.

Functionally, one of the primary rRNA binding proteins, this protein initially binds near the 5'-end of the 23S rRNA. It is important during the early stages of 50S assembly. It makes multiple contacts with different domains of the 23S rRNA in the assembled 50S subunit and ribosome. In terms of biological role, forms part of the polypeptide exit tunnel. This is Large ribosomal subunit protein uL4 from Paramagnetospirillum magneticum (strain ATCC 700264 / AMB-1) (Magnetospirillum magneticum).